The following is a 294-amino-acid chain: uncharacterized protein (294 aa).

The tract at residues 1–32 (MSHLKDPTTQYYTGEYPKQKQPTPGIQAKMTP) is disordered. Lys-39 carries the N6-acetyllysine modification. 53 to 77 (LVTGGDSGIGRAAAIAYAREGADVA) contacts NADP(+). A substrate-binding site is contributed by Ser-186. The Proton acceptor role is filled by Tyr-199.

The protein belongs to the short-chain dehydrogenases/reductases (SDR) family.

This is an uncharacterized protein from Escherichia coli (strain K12).